A 258-amino-acid chain; its full sequence is 5-oxoprolinase subunit A (258 aa).

The protein belongs to the LamB/PxpA family. In terms of assembly, forms a complex composed of PxpA, PxpB and PxpC.

It catalyses the reaction 5-oxo-L-proline + ATP + 2 H2O = L-glutamate + ADP + phosphate + H(+). Catalyzes the cleavage of 5-oxoproline to form L-glutamate coupled to the hydrolysis of ATP to ADP and inorganic phosphate. In Deinococcus radiodurans (strain ATCC 13939 / DSM 20539 / JCM 16871 / CCUG 27074 / LMG 4051 / NBRC 15346 / NCIMB 9279 / VKM B-1422 / R1), this protein is 5-oxoprolinase subunit A.